Consider the following 360-residue polypeptide: GTP 3',8-cyclase (360 aa).

One can recognise a Radical SAM core domain in the interval 33–251 (RFGRSATDLR…LQPHFRLRPD (219 aa)). Arg-42 is a GTP binding site. The [4Fe-4S] cluster site is built by Cys-49 and Cys-53. An S-adenosyl-L-methionine-binding site is contributed by Tyr-55. Cys-56 serves as a coordination point for [4Fe-4S] cluster. Position 93 (Arg-93) interacts with GTP. Position 97 (Gly-97) interacts with S-adenosyl-L-methionine. Thr-124 contributes to the GTP binding site. Residue Ser-148 coordinates S-adenosyl-L-methionine. Lys-185 is a binding site for GTP. Position 219 (Met-219) interacts with S-adenosyl-L-methionine. [4Fe-4S] cluster is bound by residues Cys-287 and Cys-290. 292-294 (RTR) contacts GTP. Position 304 (Cys-304) interacts with [4Fe-4S] cluster.

It belongs to the radical SAM superfamily. MoaA family. Monomer and homodimer. Requires [4Fe-4S] cluster as cofactor.

The catalysed reaction is GTP + AH2 + S-adenosyl-L-methionine = (8S)-3',8-cyclo-7,8-dihydroguanosine 5'-triphosphate + 5'-deoxyadenosine + L-methionine + A + H(+). The protein operates within cofactor biosynthesis; molybdopterin biosynthesis. Functionally, catalyzes the cyclization of GTP to (8S)-3',8-cyclo-7,8-dihydroguanosine 5'-triphosphate. The polypeptide is GTP 3',8-cyclase (Mycobacterium marinum (strain ATCC BAA-535 / M)).